Reading from the N-terminus, the 347-residue chain is MTDVPRMVTPERRSDDVGDTVLRPQRLAEFVGQAQARANLQIFIDAARKRKEALDHVLFVGPPGLGKTTLAQIVARELGVGFRATSGPVIAKAGDLAALLTNLEERDVLFIDEIHRLSPAVEEVLYPAMEDFQLDLIIGEGPAARSVKIELSKFTLVGATTRAGLLTNPLRDRFGIPVRLNFYTVDELEKIVSRGARVLDVGMTADGANEIARRARGTPRIAGRLLRRVRDFASAADAASINRKIADHALGALEVDAAGLDAMDRRYLTTIALNYGGGPVGVETMAAALSEPRDAIEDIIEPFLIQCGYLQRTPRGRLLTSHAFRHLGLTEPSRDPSQFGLFGGEDE.

The interval 1–183 (MTDVPRMVTP…FGIPVRLNFY (183 aa)) is large ATPase domain (RuvB-L). Residues leucine 22, arginine 23, glycine 64, lysine 67, threonine 68, threonine 69, 130 to 132 (EDF), arginine 173, tyrosine 183, and arginine 220 contribute to the ATP site. Threonine 68 serves as a coordination point for Mg(2+). The small ATPAse domain (RuvB-S) stretch occupies residues 184 to 254 (TVDELEKIVS…IADHALGALE (71 aa)). A head domain (RuvB-H) region spans residues 257 to 347 (AAGLDAMDRR…QFGLFGGEDE (91 aa)). DNA-binding residues include arginine 293, arginine 312, and arginine 317.

The protein belongs to the RuvB family. In terms of assembly, homohexamer. Forms an RuvA(8)-RuvB(12)-Holliday junction (HJ) complex. HJ DNA is sandwiched between 2 RuvA tetramers; dsDNA enters through RuvA and exits via RuvB. An RuvB hexamer assembles on each DNA strand where it exits the tetramer. Each RuvB hexamer is contacted by two RuvA subunits (via domain III) on 2 adjacent RuvB subunits; this complex drives branch migration. In the full resolvosome a probable DNA-RuvA(4)-RuvB(12)-RuvC(2) complex forms which resolves the HJ.

The protein resides in the cytoplasm. It carries out the reaction ATP + H2O = ADP + phosphate + H(+). The RuvA-RuvB-RuvC complex processes Holliday junction (HJ) DNA during genetic recombination and DNA repair, while the RuvA-RuvB complex plays an important role in the rescue of blocked DNA replication forks via replication fork reversal (RFR). RuvA specifically binds to HJ cruciform DNA, conferring on it an open structure. The RuvB hexamer acts as an ATP-dependent pump, pulling dsDNA into and through the RuvAB complex. RuvB forms 2 homohexamers on either side of HJ DNA bound by 1 or 2 RuvA tetramers; 4 subunits per hexamer contact DNA at a time. Coordinated motions by a converter formed by DNA-disengaged RuvB subunits stimulates ATP hydrolysis and nucleotide exchange. Immobilization of the converter enables RuvB to convert the ATP-contained energy into a lever motion, pulling 2 nucleotides of DNA out of the RuvA tetramer per ATP hydrolyzed, thus driving DNA branch migration. The RuvB motors rotate together with the DNA substrate, which together with the progressing nucleotide cycle form the mechanistic basis for DNA recombination by continuous HJ branch migration. Branch migration allows RuvC to scan DNA until it finds its consensus sequence, where it cleaves and resolves cruciform DNA. This Nitrobacter hamburgensis (strain DSM 10229 / NCIMB 13809 / X14) protein is Holliday junction branch migration complex subunit RuvB.